We begin with the raw amino-acid sequence, 635 residues long: Very-long-chain aldehyde decarbonylase GL1-6 (635 aa).

4 consecutive transmembrane segments (helical) span residues Leu46–Ile66, Ile100–Ala120, Gly127–His147, and Val183–Ser203. A Fatty acid hydroxylase domain is found at Val139–Thr273.

This sequence belongs to the sterol desaturase family. In terms of assembly, homodimer.

It localises to the endoplasmic reticulum membrane. The catalysed reaction is a long-chain fatty aldehyde + 2 NADPH + O2 + H(+) = a long-chain alkane + formate + 2 NADP(+) + H2O. Its function is as follows. Aldehyde decarbonylase involved in the conversion of aldehydes to alkanes. Core component of a very-long-chain alkane synthesis complex. The chain is Very-long-chain aldehyde decarbonylase GL1-6 from Oryza sativa subsp. indica (Rice).